The chain runs to 140 residues: Transcription antitermination protein NusB (140 aa).

Belongs to the NusB family.

Functionally, involved in transcription antitermination. Required for transcription of ribosomal RNA (rRNA) genes. Binds specifically to the boxA antiterminator sequence of the ribosomal RNA (rrn) operons. This is Transcription antitermination protein NusB from Sorangium cellulosum (strain So ce56) (Polyangium cellulosum (strain So ce56)).